The sequence spans 490 residues: JNK-interacting protein 1 (490 aa).

2 disordered regions span residues 1–71 (MADS…DHEP) and 213–254 (EDSS…PVSQ). A compositionally biased stretch (polar residues) spans 231 to 249 (GHSTAHSPNDFKSMSPQIT). Positions 271-332 (MLEATHRGLH…PSAYAVDLDY (62 aa)) constitute an SH3 domain. Residues 344–479 (KERYLLGYLG…FQRFYQKFIE (136 aa)) form the PID domain.

This sequence belongs to the JIP scaffold family. In terms of assembly, forms homo- and heterooligomeric complexes. Binds Hep, a dual specificity protein kinase in the JNK pathway, but not its downstream target bsk. The C-terminal region interacts with the kinesin light chain protein, Klc, and the C-terminal PTY motif of amyloid-beta protein precursor-like protein, Appl. In terms of tissue distribution, expressed in the brain, CNS, PNS and cells posterior to the morphogenetic furrow in the eye imaginal disk of late embryos.

It is found in the cytoplasm. Its function is as follows. The JNK-interacting protein (JIP) group of scaffold proteins selectively mediates JNK signaling by aggregating specific components of the MAPK cascade to form a functional JNK signaling module. May function as a regulator of vesicle transport, through interactions with the JNK-signaling components and motor proteins. This chain is JNK-interacting protein 1 (Aplip1), found in Drosophila melanogaster (Fruit fly).